A 191-amino-acid chain; its full sequence is NADH-quinone oxidoreductase subunit B 2 (191 aa).

The [4Fe-4S] cluster site is built by C69, C70, C134, and C164.

The protein belongs to the complex I 20 kDa subunit family. In terms of assembly, NDH-1 is composed of 14 different subunits. Subunits NuoB, C, D, E, F, and G constitute the peripheral sector of the complex. [4Fe-4S] cluster is required as a cofactor.

Its subcellular location is the cell inner membrane. It catalyses the reaction a quinone + NADH + 5 H(+)(in) = a quinol + NAD(+) + 4 H(+)(out). NDH-1 shuttles electrons from NADH, via FMN and iron-sulfur (Fe-S) centers, to quinones in the respiratory chain. Couples the redox reaction to proton translocation (for every two electrons transferred, four hydrogen ions are translocated across the cytoplasmic membrane), and thus conserves the redox energy in a proton gradient. The chain is NADH-quinone oxidoreductase subunit B 2 from Gluconacetobacter diazotrophicus (strain ATCC 49037 / DSM 5601 / CCUG 37298 / CIP 103539 / LMG 7603 / PAl5).